Here is a 98-residue protein sequence, read N- to C-terminus: Large ribosomal subunit protein uL23 (98 aa).

This sequence belongs to the universal ribosomal protein uL23 family. In terms of assembly, part of the 50S ribosomal subunit. Contacts protein L29, and trigger factor when it is bound to the ribosome.

Its function is as follows. One of the early assembly proteins it binds 23S rRNA. One of the proteins that surrounds the polypeptide exit tunnel on the outside of the ribosome. Forms the main docking site for trigger factor binding to the ribosome. This Bifidobacterium animalis subsp. lactis (strain AD011) protein is Large ribosomal subunit protein uL23.